A 283-amino-acid chain; its full sequence is Transmembrane protein 45B (283 aa).

Transmembrane regions (helical) follow at residues His-7–Phe-27, Leu-55–Val-75, Met-99–Val-119, Val-121–Phe-141, Ile-153–Phe-173, Leu-187–Gly-207, and Ile-218–Ile-238. The segment at Gly-261–Glu-283 is disordered. Positions Lys-264–Ala-275 are enriched in polar residues.

The protein belongs to the TMEM45 family.

The protein localises to the membrane. This is Transmembrane protein 45B (tmem45b) from Danio rerio (Zebrafish).